Here is a 192-residue protein sequence, read N- to C-terminus: PBAN-type neuropeptides (192 aa).

A signal peptide spans 1 to 23; it reads MYKTNIVFNVLALALFSIFFASC. Leucine amide is present on Leu47. The propeptide occupies 51-94; it reads SMKPSTEDNRQTFLRLLEAADALKFYYDQLPYERQADEPETKVT. A leucine amide mark is found at Leu103, Leu122, Leu158, and Leu168. The propeptide occupies 171–192; it reads ELSYDYPTKYRVARSVNKTMDN.

Belongs to the pyrokinin family. Expression is restricted to the subesophageal ganglion.

The protein localises to the secreted. In terms of biological role, a hormone that controls sex pheromone production in females and pheromone responsiveness in male. Also mediates visceral muscle contractile activity (myotropic activity). Identical to MRCH which is implicated in the formation of both melanin in the cuticle and ommochrome in the epidermis of armyworm species. Its function is as follows. Diapause hormone (DH) is responsible for induction of embryonic diapause. The three SGNPS are far less active than DH in inducing diapause eggs. Beta-SGNP expressed higher pban activity than PBAN-I, but alpha- and gamma-SGNP were far less active in pheromonotropic activity. The chain is PBAN-type neuropeptides from Bombyx mori (Silk moth).